A 560-amino-acid chain; its full sequence is Zinc finger protein 250 (560 aa).

Residues 22-93 enclose the KRAB domain; the sequence is LTFEDVAVLL…DRKGAKKSQG (72 aa). Residues lysine 125, lysine 136, lysine 148, and lysine 162 each participate in a glycyl lysine isopeptide (Lys-Gly) (interchain with G-Cter in SUMO2) cross-link. The segment at 199-221 adopts a C2H2-type 1 zinc-finger fold; it reads YMCVECGKCFGRSSHLLQHQRIH. Lysine 225 is covalently cross-linked (Glycyl lysine isopeptide (Lys-Gly) (interchain with G-Cter in SUMO2)). 7 consecutive C2H2-type zinc fingers follow at residues 227-249, 255-277, 283-305, 311-333, 339-361, 367-389, and 395-417; these read YVCSVCGKAFSQSSVLSKHRRIH, YECNECGKAFRVSSDLAQHHKIH, HECLECRKAFTQLSHLIQHQRIH, YVCPLCGKAFNHSTVLRSHQRVH, HRCNECGKTFSVKRTLLQHQRIH, YTCSECGKAFSDRSVLIQHHNVH, and YECSECGKTFSHRSTLMNHERIH. Lysine 421 participates in a covalent cross-link: Glycyl lysine isopeptide (Lys-Gly) (interchain with G-Cter in SUMO2). C2H2-type zinc fingers lie at residues 423-445, 451-473, 479-501, 507-529, and 535-557; these read YACYECGKAFVQHSHLIQHQRVH, YVCGECGHAFSARRSLIQHERIH, FQCTECGKAFSLKATLIVHLRTH, YECNSCGKAFSQYSVLIQHQRIH, and YECGECGRAFNQHGHLIQHQKVH.

The protein belongs to the krueppel C2H2-type zinc-finger protein family.

Its subcellular location is the nucleus. Its function is as follows. May be involved in transcriptional regulation. This chain is Zinc finger protein 250 (ZNF250), found in Homo sapiens (Human).